The following is a 268-amino-acid chain: Putative carbamate hydrolase RutD (268 aa).

In terms of domain architecture, AB hydrolase-1 spans 24–243 (VILSAGLGGS…NATLDIAPWG (220 aa)).

Belongs to the AB hydrolase superfamily. Hydrolase RutD family.

It catalyses the reaction carbamate + 2 H(+) = NH4(+) + CO2. In terms of biological role, involved in pyrimidine catabolism. May facilitate the hydrolysis of carbamate, a reaction that can also occur spontaneously. The chain is Putative carbamate hydrolase RutD from Caulobacter sp. (strain K31).